A 289-amino-acid polypeptide reads, in one-letter code: Aquaporin PIP1-1 (289 aa).

Residues 1–36 (MEGKEEDVRLGANRYSERQPIGTAAQGAGDDKDYKE) are disordered. 2 consecutive transmembrane segments (helical) span residues 58 to 78 (IAEF…VMGV) and 93 to 115 (IAWS…SGGH). Residues 117–119 (NPA) carry the NPA 1 motif. The next 3 membrane-spanning stretches (helical) occupy residues 136–156 (IFYI…VKGF), 178–198 (GDGL…VFSA), and 212–232 (ILAP…TIPI). Residues 238–240 (NPA) carry the NPA 2 motif. Residues 260-280 (IFWVGPFVGAALAAIYHQVII) form a helical membrane-spanning segment.

This sequence belongs to the MIP/aquaporin (TC 1.A.8) family. PIP (TC 1.A.8.11) subfamily. Expressed in roots, leaves and anthers.

Its subcellular location is the cell membrane. In terms of biological role, may function as water channel to facilitate the transport of water across cell membrane. This is Aquaporin PIP1-1 (PIP1-1) from Oryza sativa subsp. japonica (Rice).